A 514-amino-acid chain; its full sequence is Putative fucosyltransferase 10 (514 aa).

Residues N185, N210, N355, N377, and N456 are each glycosylated (N-linked (GlcNAc...) asparagine).

The protein belongs to the glycosyltransferase 37 family. Expressed in root, leaves, stems and seedlings.

Its subcellular location is the golgi apparatus. It functions in the pathway protein modification; protein glycosylation. Its function is as follows. May be involved in cell wall biosynthesis. May act as a fucosyltransferase. This is Putative fucosyltransferase 10 (FUT10) from Arabidopsis thaliana (Mouse-ear cress).